Here is a 186-residue protein sequence, read N- to C-terminus: Peptidyl-tRNA hydrolase (186 aa).

Y14 is a binding site for tRNA. The Proton acceptor role is filled by H19. Positions 64, 66, and 112 each coordinate tRNA.

This sequence belongs to the PTH family. Monomer.

It localises to the cytoplasm. It carries out the reaction an N-acyl-L-alpha-aminoacyl-tRNA + H2O = an N-acyl-L-amino acid + a tRNA + H(+). Hydrolyzes ribosome-free peptidyl-tRNAs (with 1 or more amino acids incorporated), which drop off the ribosome during protein synthesis, or as a result of ribosome stalling. Its function is as follows. Catalyzes the release of premature peptidyl moieties from peptidyl-tRNA molecules trapped in stalled 50S ribosomal subunits, and thus maintains levels of free tRNAs and 50S ribosomes. This is Peptidyl-tRNA hydrolase from Listeria monocytogenes serotype 4b (strain CLIP80459).